Here is a 77-residue protein sequence, read N- to C-terminus: DNA-directed RNA polymerase subunit epsilon (77 aa).

This sequence belongs to the RNA polymerase subunit epsilon family. As to quaternary structure, RNAP is composed of a core of 2 alpha, a beta and a beta' subunit. The core is associated with a delta subunit, and at least one of epsilon or omega. When a sigma factor is associated with the core the holoenzyme is formed, which can initiate transcription.

It catalyses the reaction RNA(n) + a ribonucleoside 5'-triphosphate = RNA(n+1) + diphosphate. In terms of biological role, a non-essential component of RNA polymerase (RNAP). This is DNA-directed RNA polymerase subunit epsilon from Streptococcus pneumoniae (strain Hungary19A-6).